The primary structure comprises 342 residues: Deoxyguanosinetriphosphate triphosphohydrolase-like protein (342 aa).

The region spanning 75–190 (RLVHTLEVSQ…VRFADKIAYV (116 aa)) is the HD domain.

Belongs to the dGTPase family. Type 2 subfamily.

In Clostridium perfringens (strain SM101 / Type A), this protein is Deoxyguanosinetriphosphate triphosphohydrolase-like protein.